We begin with the raw amino-acid sequence, 150 residues long: UPF0178 protein Bpet3884 (150 aa).

Belongs to the UPF0178 family.

This Bordetella petrii (strain ATCC BAA-461 / DSM 12804 / CCUG 43448) protein is UPF0178 protein Bpet3884.